A 475-amino-acid chain; its full sequence is 7-dehydrocholesterol reductase (475 aa).

The segment at 1–21 is disordered; the sequence is MAAKSQPNIPKAKSLDGVTND. Serine 14 carries the post-translational modification Phosphoserine. Transmembrane regions (helical) follow at residues 40-60, 154-174, 177-197, 266-286, 306-326, and 331-351; these read LASV…FIMA, THLL…TIIF, WIPL…FAMV, VTNA…DFFW, LGWG…LYLV, and QLST…YYIF. Residues lysine 358, arginine 362, leucine 395, tryptophan 400, and 407–408 each bind NADP(+); that span reads NY. The helical transmembrane segment at 420–440 threads the bilayer; that stretch reads LACGGGHLLPYFYIIYMAILL. Residues aspartate 447, 451 to 455, and tyrosine 462 each bind NADP(+); that span reads CASKY.

The protein belongs to the ERG4/ERG24 family. As to quaternary structure, interacts with DHCR24; this interaction regulates DHCR7 activity. Interacts with TMEM147. As to expression, widely expressed. Most abundant in adrenal gland, liver, testis, and brain.

It localises to the endoplasmic reticulum membrane. It carries out the reaction cholesterol + NADP(+) = 7-dehydrocholesterol + NADPH + H(+). The catalysed reaction is 7-dehydrodesmosterol + NADPH + H(+) = desmosterol + NADP(+). It catalyses the reaction 5,6alpha-epoxy-5alpha-cholestan-3beta-ol + H2O = 5alpha-cholestane-3beta,5,6beta-triol. The enzyme catalyses 5,6beta-epoxy-5beta-cholestan-3beta-ol + H2O = 5alpha-cholestane-3beta,5,6beta-triol. It functions in the pathway steroid biosynthesis; cholesterol biosynthesis. Its activity is regulated as follows. 7-DHC reductase and cholesterol-5,6-epoxide hydrolase (ChEH) activities are inhibited by tamoxifen and the selective AEBS ligand (4-benzyl-phenoxy)-ethyl-N-pyrrolidine (PBPE). ChEH activity is inhibited by oleic acid. Functionally, oxidoreductase that catalyzes the last step of the cholesterol synthesis pathway, which transforms cholesta-5,7-dien-3beta-ol (7-dehydrocholesterol,7-DHC) into cholesterol by reducing the C7-C8 double bond of its sterol core. Can also metabolize cholesta-5,7,24-trien-3beta-ol (7-dehydrodemosterol, 7-DHD) to desmosterol, which is then metabolized by the Delta(24)-sterol reductase (DHCR24) to cholesterol. Modulates ferroptosis (a form of regulated cell death driven by iron-dependent lipid peroxidation) through the metabolic breakdown of the anti-ferroptotic metabolites 7-DHC and 7-DHD which, when accumulated, divert the propagation of peroxyl radical-mediated damage from phospholipid components to its sterol core, protecting plasma and mitochondrial membranes from phospholipid autoxidation. In terms of biological role, component of the microsomal antiestrogen binding site (AEBS), a multiproteic complex at the ER membrane that consists of an association between cholestenol Delta-isomerase/EBP and DHCR7. This complex is responsible for cholesterol-5,6-epoxide hydrolase (ChEH) activity, which consists in the hydration of cholesterol-5,6-epoxides (5,6-EC) into cholestane-3beta,5alpha,6beta-triol (CT). The precise role of each component of this complex has not been described yet. The protein is 7-dehydrocholesterol reductase of Homo sapiens (Human).